A 233-amino-acid chain; its full sequence is Mediator of RNA polymerase II transcription subunit 7 (233 aa).

K185 is covalently cross-linked (Glycyl lysine isopeptide (Lys-Gly) (interchain with G-Cter in SUMO1); alternate). K185 is covalently cross-linked (Glycyl lysine isopeptide (Lys-Gly) (interchain with G-Cter in SUMO2); alternate). The tract at residues 187–213 (EPMDADDSNNCTGQNEHQRENSGHRRD) is disordered. The residue at position 194 (S194) is a Phosphoserine. Over residues 202–213 (EHQRENSGHRRD) the composition is skewed to basic and acidic residues.

Belongs to the Mediator complex subunit 7 family. In terms of assembly, component of the Mediator complex, which is composed of MED1, MED4, MED6, MED7, MED8, MED9, MED10, MED11, MED12, MED13, MED13L, MED14, MED15, MED16, MED17, MED18, MED19, MED20, MED21, MED22, MED23, MED24, MED25, MED26, MED27, MED29, MED30, MED31, CCNC, CDK8 and CDC2L6/CDK11. The MED12, MED13, CCNC and CDK8 subunits form a distinct module termed the CDK8 module. Mediator containing the CDK8 module is less active than Mediator lacking this module in supporting transcriptional activation. Individual preparations of the Mediator complex lacking one or more distinct subunits have been variously termed ARC, CRSP, DRIP, PC2, SMCC and TRAP. In terms of processing, constitutively sumoylated.

It is found in the nucleus. Its function is as follows. Component of the Mediator complex, a coactivator involved in the regulated transcription of nearly all RNA polymerase II-dependent genes. Mediator functions as a bridge to convey information from gene-specific regulatory proteins to the basal RNA polymerase II transcription machinery. Mediator is recruited to promoters by direct interactions with regulatory proteins and serves as a scaffold for the assembly of a functional preinitiation complex with RNA polymerase II and the general transcription factors. The sequence is that of Mediator of RNA polymerase II transcription subunit 7 (MED7) from Homo sapiens (Human).